An 861-amino-acid chain; its full sequence is Integrator complex subunit 6-like (861 aa).

A VWFA domain is found at 3 to 227; the sequence is ILLFLIDTSA…QCLESLVQKV (225 aa). The interval 605–626 is disordered; it reads PQNKVKRPGEPNSPMSSKRRRS. S617 is modified (phosphoserine).

The protein is Integrator complex subunit 6-like (INTS6L) of Homo sapiens (Human).